Reading from the N-terminus, the 795-residue chain is Mitochondrial intermediate peptidase (795 aa).

A mitochondrion-targeting transit peptide spans 1–22 (MLKTLNRRSWTCRQCIRILRRN). His561 contacts Zn(2+). Glu562 is an active-site residue. 2 residues coordinate Zn(2+): His565 and His568.

Belongs to the peptidase M3 family. Zn(2+) serves as cofactor.

Its subcellular location is the mitochondrion matrix. The enzyme catalyses Release of an N-terminal octapeptide as second stage of processing of some proteins imported into the mitochondrion.. Its function is as follows. Cleaves proteins, imported into the mitochondrion, to their mature size. While most mitochondrial precursor proteins are processed to the mature form in one step by mitochondrial processing peptidase (MPP), the sequential cleavage by MIP of an octapeptide after initial processing by MPP is a required step for a subgroup of nuclear-encoded precursor proteins destined for the matrix or the inner membrane. This is Mitochondrial intermediate peptidase (OCT1) from Coccidioides immitis (strain RS) (Valley fever fungus).